The primary structure comprises 367 residues: Choline-phosphate cytidylyltransferase A (367 aa).

Met1 is modified (N-acetylmethionine). The disordered stretch occupies residues 1–33 (MDAQCSAKVNARKRRKEAPGPNGATEEDGVPSK). N6-acetyllysine is present on Lys8. Residues Ile84, Phe85, His92, and Lys122 each coordinate CTP. The phosphocholine site is built by Lys122 and Trp151. Residues His168, Asp169, Tyr173, Gln195, Arg196, Thr197, and Ile200 each coordinate CTP. Amphipathic stretches follow at residues 228–287 (KELN…EFIG) and 298–315 (ALKHMLKEGKGRMLQAIS). Ser233 bears the Phosphoserine mark. The interval 272–293 (IDLIQKWEEKSREFIGSFLEMF) is autoinhibitory (AI). Residues 313–367 (AISPKQSPSSSPTRERSPSPSFRWPFSGKTSPPCSPANLSRHKAAAYDISEDEED) are disordered. Phosphoserine occurs at positions 315, 319, 321, 322, and 323. Residues 319–324 (SPSSSP) form repeat 1. A compositionally biased stretch (low complexity) spans 319-339 (SPSSSPTRERSPSPSFRWPFS). Thr325 carries the phosphothreonine modification. Phosphoserine is present on residues Ser329, Ser331, and Ser333. The stretch at 329-333 (SPSPS) is one 2; approximate repeat. Phosphothreonine is present on Thr342. A phosphoserine mark is found at Ser343, Ser347, Ser352, and Ser362. Repeat 3 spans residues 343–348 (SPPCSP).

The protein belongs to the cytidylyltransferase family. In terms of assembly, homodimer. The serine residues of the C-terminus are phosphorylated. The inactive soluble form is stabilized by phosphorylation, the active membrane bound form is promoted by anionic lipids or diacylglycerol, and is stabilized by dephosphorylation. Post-translationally, monoubiquitinated by the SCF(FBXL2) complex, leading to proteasomal degradation. Brain, placenta, liver, fetal and adult lung.

It is found in the cytoplasm. The protein resides in the cytosol. It localises to the membrane. The protein localises to the endoplasmic reticulum membrane. Its subcellular location is the nucleus. The enzyme catalyses phosphocholine + CTP + H(+) = CDP-choline + diphosphate. It participates in phospholipid metabolism; phosphatidylcholine biosynthesis; phosphatidylcholine from phosphocholine: step 1/2. With respect to regulation, interconverts between an inactive cytosolic form and an active membrane-bound form. Activation involves disruption of an inhibitory interaction between helices at the base of the active site and the autoinhibitory (AI) region. Activated by anionic lipid vesicles and by oleic acid or diacylglycerol-containing phosphatidylcholine vesicles. Its function is as follows. Catalyzes the key rate-limiting step in the CDP-choline pathway for phosphatidylcholine biosynthesis. The sequence is that of Choline-phosphate cytidylyltransferase A (PCYT1A) from Homo sapiens (Human).